The chain runs to 464 residues: ATP synthase subunit beta (464 aa).

153-160 serves as a coordination point for ATP; sequence GGAGVGKT.

Belongs to the ATPase alpha/beta chains family. In terms of assembly, F-type ATPases have 2 components, CF(1) - the catalytic core - and CF(0) - the membrane proton channel. CF(1) has five subunits: alpha(3), beta(3), gamma(1), delta(1), epsilon(1). CF(0) has three main subunits: a(1), b(2) and c(9-12). The alpha and beta chains form an alternating ring which encloses part of the gamma chain. CF(1) is attached to CF(0) by a central stalk formed by the gamma and epsilon chains, while a peripheral stalk is formed by the delta and b chains.

Its subcellular location is the cell inner membrane. The catalysed reaction is ATP + H2O + 4 H(+)(in) = ADP + phosphate + 5 H(+)(out). Its function is as follows. Produces ATP from ADP in the presence of a proton gradient across the membrane. The catalytic sites are hosted primarily by the beta subunits. The sequence is that of ATP synthase subunit beta from Burkholderia orbicola (strain MC0-3).